The primary structure comprises 295 residues: uncharacterized protein (295 aa).

The signal sequence occupies residues 1 to 19 (MHKLLLIITVFFTFNVAQA).

This is an uncharacterized protein from Rickettsia prowazekii (strain Madrid E).